Here is a 632-residue protein sequence, read N- to C-terminus: tRNA uridine 5-carboxymethylaminomethyl modification enzyme MnmG (632 aa).

FAD-binding positions include 13–18, Val-125, and Ser-180; that span reads GGGHAG. Position 273-287 (273-287) interacts with NAD(+); it reads GPRYCPSIEDKVMRF. Gln-370 provides a ligand contact to FAD.

The protein belongs to the MnmG family. As to quaternary structure, homodimer. Heterotetramer of two MnmE and two MnmG subunits. The cofactor is FAD.

The protein resides in the cytoplasm. Functionally, NAD-binding protein involved in the addition of a carboxymethylaminomethyl (cmnm) group at the wobble position (U34) of certain tRNAs, forming tRNA-cmnm(5)s(2)U34. The protein is tRNA uridine 5-carboxymethylaminomethyl modification enzyme MnmG of Vibrio vulnificus (strain CMCP6).